Reading from the N-terminus, the 509-residue chain is ATP synthase subunit alpha (509 aa).

G169 to T176 lines the ATP pocket.

Belongs to the ATPase alpha/beta chains family. F-type ATPases have 2 components, CF(1) - the catalytic core - and CF(0) - the membrane proton channel. CF(1) has five subunits: alpha(3), beta(3), gamma(1), delta(1), epsilon(1). CF(0) has three main subunits: a(1), b(2) and c(9-12). The alpha and beta chains form an alternating ring which encloses part of the gamma chain. CF(1) is attached to CF(0) by a central stalk formed by the gamma and epsilon chains, while a peripheral stalk is formed by the delta and b chains.

Its subcellular location is the cell inner membrane. The catalysed reaction is ATP + H2O + 4 H(+)(in) = ADP + phosphate + 5 H(+)(out). Functionally, produces ATP from ADP in the presence of a proton gradient across the membrane. The alpha chain is a regulatory subunit. This is ATP synthase subunit alpha from Rhizobium leguminosarum bv. trifolii (strain WSM2304).